Consider the following 652-residue polypeptide: Acetyl-coenzyme A synthetase (652 aa).

Residues 189 to 192 (RGDK) and T311 each bind CoA. Residues 387-389 (GEP), 411-416 (DTWWQT), D500, and R515 each bind ATP. S523 lines the CoA pocket. R526 provides a ligand contact to ATP. Mg(2+) is bound by residues H539 and V542. Residue R584 participates in CoA binding. Position 609 is an N6-acetyllysine (K609).

Belongs to the ATP-dependent AMP-binding enzyme family. Requires Mg(2+) as cofactor. Acetylated. Deacetylation by the SIR2-homolog deacetylase activates the enzyme.

It catalyses the reaction acetate + ATP + CoA = acetyl-CoA + AMP + diphosphate. Its function is as follows. Catalyzes the conversion of acetate into acetyl-CoA (AcCoA), an essential intermediate at the junction of anabolic and catabolic pathways. AcsA undergoes a two-step reaction. In the first half reaction, AcsA combines acetate with ATP to form acetyl-adenylate (AcAMP) intermediate. In the second half reaction, it can then transfer the acetyl group from AcAMP to the sulfhydryl group of CoA, forming the product AcCoA. This Bartonella bacilliformis (strain ATCC 35685 / KC583 / Herrer 020/F12,63) protein is Acetyl-coenzyme A synthetase.